Here is a 359-residue protein sequence, read N- to C-terminus: Phosphate acyltransferase (359 aa).

This sequence belongs to the PlsX family. Homodimer. Probably interacts with PlsY.

The protein resides in the cytoplasm. It catalyses the reaction a fatty acyl-[ACP] + phosphate = an acyl phosphate + holo-[ACP]. Its pathway is lipid metabolism; phospholipid metabolism. Its function is as follows. Catalyzes the reversible formation of acyl-phosphate (acyl-PO(4)) from acyl-[acyl-carrier-protein] (acyl-ACP). This enzyme utilizes acyl-ACP as fatty acyl donor, but not acyl-CoA. This is Phosphate acyltransferase from Salmonella agona (strain SL483).